Consider the following 239-residue polypeptide: Vesicle-associated protein 1-2 (239 aa).

Met1 carries the post-translational modification N-acetylmethionine. Topologically, residues 1–215 (MSNELLTIDP…RRESKRSKSG (215 aa)) are cytoplasmic. Ser2 carries the post-translational modification N-acetylserine; in Vesicle-associated protein 1-2, N-terminally processed. Positions 5–125 (LLTIDPVDLQ…EETKLRVVYV (121 aa)) constitute an MSP domain. The interval 123-174 (VYVAPPRPPSPVREGSEEGSSPRASVSDNGNASDFTAAPRFSADRVDAQDNS) is disordered. Residue Ser132 is modified to Phosphoserine. The span at 140–156 (EGSSPRASVSDNGNASD) shows a compositional bias: polar residues. Ser164 is subject to Phosphoserine. Residues 169-215 (DAQDNSSEARALVTKLTEEKNSAVQLNNRLQQELDQLRRESKRSKSG) adopt a coiled-coil conformation. Residues 216–236 (GIPFMYVLLVGLIGLILGYIM) form a helical; Anchor for type IV membrane protein membrane-spanning segment.

This sequence belongs to the VAMP-associated protein (VAP) (TC 9.B.17) family. In terms of assembly, interacts with ORP3A. Binds to VLG at the endomembrane system.

The protein localises to the endoplasmic reticulum membrane. In terms of biological role, vesicle-associated protein that binds the oxysterol-binding protein ORP3A and allows its targeting to the ER. The chain is Vesicle-associated protein 1-2 from Arabidopsis thaliana (Mouse-ear cress).